Consider the following 126-residue polypeptide: MAVPSEFKYSKEHEWVKIENNVATVGITEYAQNELGDIVFVELPETDDELNEGDTFGSVESVKTVSELYAPISGKIVEVNEELEDSPEFVNESPYEKAWMVKIEISDDSQLEELLSADQYSEMIGE.

A Lipoyl-binding domain is found at 22-104; that stretch reads VATVGITEYA…YEKAWMVKIE (83 aa). An N6-lipoyllysine modification is found at Lys-63.

It belongs to the GcvH family. As to quaternary structure, the glycine cleavage system is composed of four proteins: P, T, L and H. (R)-lipoate serves as cofactor.

The glycine cleavage system catalyzes the degradation of glycine. The H protein shuttles the methylamine group of glycine from the P protein to the T protein. Its function is as follows. Is also involved in protein lipoylation via its role as an octanoyl/lipoyl carrier protein intermediate. The polypeptide is Glycine cleavage system H protein (Staphylococcus epidermidis (strain ATCC 12228 / FDA PCI 1200)).